A 57-amino-acid polypeptide reads, in one-letter code: Small ribosomal subunit protein bS21 (57 aa).

A disordered region spans residues 31 to 57 (EVRKRKHYEKPSVRRKKKSEAARKRKF). The segment covering 33–57 (RKRKHYEKPSVRRKKKSEAARKRKF) has biased composition (basic residues).

This sequence belongs to the bacterial ribosomal protein bS21 family.

This is Small ribosomal subunit protein bS21 (rpsU) from Halalkalibacterium halodurans (strain ATCC BAA-125 / DSM 18197 / FERM 7344 / JCM 9153 / C-125) (Bacillus halodurans).